Here is a 443-residue protein sequence, read N- to C-terminus: MSTSDSIVSSQTKQSSWRKSDTTWTLGLFGTAIGAGVLFFPIRAGFGGLIPILLMLVLAYPIAFYCHRALARLCLSGSNPSGNITETVEEHFGKTGGVVITFLYFFAICPLLWIYGVTITNTFMTFWENQLGFAPLNRGFVALFLLLLMAFVIWFGKDLMVKVMSYLVWPFIASLVLISLSLIPYWNSAVIDQVDLGSLSLTGHDGILITVWLGISIMVFSFNFSPIVSSFVVSKREEYEKDFGRDFTERKCSQIISRASMLMVAVVMFFAFSCLFTLSPANMAEAKAQNIPVLSYLANHFASMTGTKTTFAITLEYAASIIALVAIFKSFFGHYLGTLEGLNGLILKFGYKGDKTKVSLGKLNTLSMIFIMGSTWVVAYANPNILDLIEAMGAPIIASLLCLLPMYAIRKAPSLAKYRGRLDNVFVTVIGLLTILNIVYKLF.

Helical transmembrane passes span 22–42 (TTWT…FFPI), 44–64 (AGFG…PIAF), 97–117 (GVVI…IYGV), 140–160 (FVAL…KDLM), 163–183 (VMSY…LSLI), 207–227 (ILIT…FSPI), 261–281 (MLMV…LSPA), 311–331 (FAIT…FKSF), 366–386 (LSMI…PNIL), 389–409 (IEAM…MYAI), and 423–443 (DNVF…YKLF).

It belongs to the amino acid/polyamine transporter 2 family. SdaC/TdcC subfamily.

Its subcellular location is the cell inner membrane. The enzyme catalyses L-threonine(in) + H(+)(in) = L-threonine(out) + H(+)(out). It catalyses the reaction L-serine(in) + H(+)(in) = L-serine(out) + H(+)(out). In terms of biological role, involved in the import of threonine and serine into the cell, with the concomitant import of a proton (symport system). In Shigella flexneri serotype 5b (strain 8401), this protein is Threonine/serine transporter TdcC.